The sequence spans 66 residues: Large ribosomal subunit protein bL35 (66 aa).

Positions 1–16 are enriched in basic residues; it reads MPKQKTHRASAKRFKR. The tract at residues 1–21 is disordered; sequence MPKQKTHRASAKRFKRTGNGG.

It belongs to the bacterial ribosomal protein bL35 family.

The chain is Large ribosomal subunit protein bL35 from Lactococcus lactis subsp. cremoris (strain MG1363).